A 289-amino-acid polypeptide reads, in one-letter code: 4-hydroxybenzoate octaprenyltransferase (289 aa).

The next 9 helical transmembrane spans lie at 22 to 42 (AGWLLLLWPTLSALWLASHGF), 45 to 65 (WHLVTVFTLGTFLMRSAGCCI), 96 to 116 (LGLGAVLALLAFGLVLTTNAV), 118 to 138 (IAWSFAALAVTLAYPFAKRYV), 140 to 160 (MPQAVLGVAFSCGILMAFAAV), 164 to 184 (VPPLAWALLLGNLFWVIAYDT), 211 to 231 (VAGVMLSYLIFISIWAFALIQ), 236 to 256 (AIFMIAIALALAQALWHGWLI), and 267 to 287 (AFRLNHWLGFTVFAGVALSYW).

Belongs to the UbiA prenyltransferase family. Requires Mg(2+) as cofactor.

It localises to the cell inner membrane. The catalysed reaction is all-trans-octaprenyl diphosphate + 4-hydroxybenzoate = 4-hydroxy-3-(all-trans-octaprenyl)benzoate + diphosphate. The protein operates within cofactor biosynthesis; ubiquinone biosynthesis. Functionally, catalyzes the prenylation of para-hydroxybenzoate (PHB) with an all-trans polyprenyl group. Mediates the second step in the final reaction sequence of ubiquinone-8 (UQ-8) biosynthesis, which is the condensation of the polyisoprenoid side chain with PHB, generating the first membrane-bound Q intermediate 3-octaprenyl-4-hydroxybenzoate. The polypeptide is 4-hydroxybenzoate octaprenyltransferase (Polaromonas naphthalenivorans (strain CJ2)).